Reading from the N-terminus, the 1080-residue chain is Zorya protein ZorD (1080 aa).

In terms of domain architecture, Helicase ATP-binding spans L596–G779. The Helicase C-terminal domain maps to K904 to S1069.

Component of antiviral defense system Zorya type I, composed of ZorA, ZorB, ZorC and ZorD. Expression of Zorya type I in E.coli (strain MG1655) confers 10,000-fold resistance to phage SECphi27, 100-fold resistance to lambda, and 10-fold resistance to T7. While most T7 infected Zorya-containing cells undergo abortive infection, a minority produce viable phage progeny. These eventually accumulate to a high multiplicity of infection, leading to culture collapse by 2 hours after initial infection. ZorA and ZorB probably assemble in the cell inner membrane and exert their effect there. This may have ATPase activity. The chain is Zorya protein ZorD from Escherichia coli O139:H28 (strain E24377A / ETEC).